A 932-amino-acid polypeptide reads, in one-letter code: MTVDYKNTLNLPETGFPMRGDLAKREPNMLKSWYEKDLYQKIRQASKGKKSFILHDGPPYANGTIHIGHAVNKILKDIIVKSKTALGYDSPYIPGWDCHGLPIELKVEGLVGKPNQNISAAQFREACRQYAAEQVEGQKKDFIRLGVLGDWDNPYLTMNYHTEANIIRAFGKAVENGHLYKGSKPVHWCLDCASSLAEAEVEYEDKVSPSIYVRFSAVDSDAVLAKFNATDKGTGNISAVIWTTTPWTIPSNRAIAIHENLDYQLVQFNDERVILAKDLVEEVAKAAGVEQVVILGESKGKDLEWLRFQHPFYDFSVPFILGDHVTTDGGTGLVHTAPDHGHDDYIIAQKNGIEMAGLIGNDGLFKADVPFFAGKGVFESNDLVVAKLQEVGAMLKFSKIKHSYPHCWRHKTPIIFRATPQWFIGMEKQGLRQQALSEIKKVRWIPDWGQARIEKMVENRPDWCISRQRTWGVPVALFIHKETEELHPRTVELVEEVAKRVEQKGIQAWWDLDTAELLGADADNYIKVPDTLDVWFDSGSTYYSVVKDRPEFNGQEADMYLEGSDQHRGWFMSSLMLSTATDNKAPYKQVLTHGFTVDGQGRKMSKSIGNIVTPQEVMDKFGGDILRLWVASTDYTGEISVSDEILKRAADAYRRIRNTARFLLANLNGFDPKRDLVKPEEMMVLDRWAVDCAYQAQNEIKDAYDNYQFHAVIQRLMKFCSIEMGSFYLDIIKDRQYTTKADSLARRSCQTALWHIAEALVRWIAPVLSFTADEIWQYIPGERGEFVFTEEFYNGLFALDANEQMNDAYWQQVITLRNEVNRVLEQARNDKIIGAALEAELTIYANDTYAPLLAKLQNELRFVLLTSKAEVKPLADADVAEGEVKGFAVKVVRSANHKCPRCWHYSDSKDAESLCSRCDENVNGQGEVRQFA.

The short motif at 59 to 69 is the 'HIGH' region element; it reads PYANGTIHIGH. Glu562 provides a ligand contact to L-isoleucyl-5'-AMP. A 'KMSKS' region motif is present at residues 603–607; that stretch reads KMSKS. ATP is bound at residue Lys606. Zn(2+) contacts are provided by Cys899, Cys902, Cys915, and Cys918.

This sequence belongs to the class-I aminoacyl-tRNA synthetase family. IleS type 1 subfamily. As to quaternary structure, monomer. Zn(2+) is required as a cofactor.

Its subcellular location is the cytoplasm. It catalyses the reaction tRNA(Ile) + L-isoleucine + ATP = L-isoleucyl-tRNA(Ile) + AMP + diphosphate. In terms of biological role, catalyzes the attachment of isoleucine to tRNA(Ile). As IleRS can inadvertently accommodate and process structurally similar amino acids such as valine, to avoid such errors it has two additional distinct tRNA(Ile)-dependent editing activities. One activity is designated as 'pretransfer' editing and involves the hydrolysis of activated Val-AMP. The other activity is designated 'posttransfer' editing and involves deacylation of mischarged Val-tRNA(Ile). This Pasteurella multocida (strain Pm70) protein is Isoleucine--tRNA ligase.